Consider the following 300-residue polypeptide: MALDEAPAEARPGSRAVELEIDGRSRIFDIDDPDLPKWIDEEAFRSDDYPYKKKLDREEYEETLTKLQIELVKVQFWMQATGKRVMAVFEGRDAAGKGGAIHATTANMNPRSARVVALTKPTETERGQWYFQRYVATFPTAGEFVLFDRSWYNRAGVEPVMGFCTPDQYEQFLKEAPRFEEMIANEGIHLFKFWINIGREMQLKRFHDRRHDPLKIWKLSPMDIAALSKWDDYTGKRDRMLKETHTEHGPWAVIRGNDKRRSRINVIRHMLTKLDYDGKDEAAIGEVDEKILGSGPGFLR.

It belongs to the polyphosphate kinase 2 (PPK2) family. Class I subfamily. In terms of assembly, homotetramer. The cofactor is Mg(2+).

It carries out the reaction [phosphate](n) + ATP = [phosphate](n+1) + ADP. The catalysed reaction is [phosphate](n) + GTP = [phosphate](n+1) + GDP. Uses inorganic polyphosphate (polyP) as a donor to convert ADP to ATP. Can also convert GDP to GTP, with lower efficiency. Cannot dephosphorylate ATP in the presence of polyP. The chain is ADP-polyphosphate phosphotransferase 1 from Rhizobium meliloti (strain 1021) (Ensifer meliloti).